Reading from the N-terminus, the 511-residue chain is Phospho-2-dehydro-3-deoxyheptonate aldolase 1, chloroplastic (511 aa).

A chloroplast-targeting transit peptide spans methionine 1–alanine 49.

It belongs to the class-II DAHP synthase family. Higher levels seen in the cotyledons than in the leaves and flowers. Lower levels seen in the roots and stems.

Its subcellular location is the plastid. It is found in the chloroplast. The catalysed reaction is D-erythrose 4-phosphate + phosphoenolpyruvate + H2O = 7-phospho-2-dehydro-3-deoxy-D-arabino-heptonate + phosphate. The protein operates within metabolic intermediate biosynthesis; chorismate biosynthesis; chorismate from D-erythrose 4-phosphate and phosphoenolpyruvate: step 1/7. In terms of biological role, may be involved in the synthesis of secondary metabolites derived from intermediates of the pre-chorismate pathway up to shikimate. This is Phospho-2-dehydro-3-deoxyheptonate aldolase 1, chloroplastic from Solanum lycopersicum (Tomato).